Reading from the N-terminus, the 502-residue chain is Hexokinase-4 (502 aa).

A helical transmembrane segment spans residues 4 to 24; sequence VLVMLTAAAAVVACSVATVMV. In terms of domain architecture, Hexokinase spans 35 to 491; sequence RRVVGLLKDL…SSIGSALLLA (457 aa). The segment at 90-228 is hexokinase small subdomain; the sequence is NGSETGTYYA…GLDIRVAALV (139 aa). ADP-binding residues include G104 and S105. The D-glucose site is built by T194, K195, N229, and D230. Residues 229–480 form a hexokinase large subdomain region; that stretch reads NDTVGALSFG…QHVVVKAMED (252 aa). An ADP-binding site is contributed by T253. 3 residues coordinate D-glucose: N256, E284, and E315. G445 serves as a coordination point for ADP.

Belongs to the hexokinase family.

It localises to the mitochondrion outer membrane. The enzyme catalyses a D-hexose + ATP = a D-hexose 6-phosphate + ADP + H(+). It carries out the reaction D-fructose + ATP = D-fructose 6-phosphate + ADP + H(+). The catalysed reaction is D-glucose + ATP = D-glucose 6-phosphate + ADP + H(+). It participates in carbohydrate metabolism; hexose metabolism. It functions in the pathway carbohydrate degradation; glycolysis; D-glyceraldehyde 3-phosphate and glycerone phosphate from D-glucose: step 1/4. In terms of biological role, fructose and glucose phosphorylating enzyme. May be involved in the phosphorylation of glucose during the export from mitochondrion to cytosol. The chain is Hexokinase-4 from Arabidopsis thaliana (Mouse-ear cress).